The following is a 383-amino-acid chain: Galactokinase (383 aa).

Residue 34–37 (EHTD) participates in substrate binding. 124 to 130 (GAGLSSS) contacts ATP. Mg(2+)-binding residues include Ser-130 and Glu-162. Catalysis depends on Asp-174, which acts as the Proton acceptor. Tyr-223 provides a ligand contact to substrate.

It belongs to the GHMP kinase family. GalK subfamily.

Its subcellular location is the cytoplasm. It carries out the reaction alpha-D-galactose + ATP = alpha-D-galactose 1-phosphate + ADP + H(+). It functions in the pathway carbohydrate metabolism; galactose metabolism. Functionally, catalyzes the transfer of the gamma-phosphate of ATP to D-galactose to form alpha-D-galactose-1-phosphate (Gal-1-P). The chain is Galactokinase from Yersinia pseudotuberculosis serotype O:1b (strain IP 31758).